Consider the following 1188-residue polypeptide: DNA polymerase (1188 aa).

Positions 1 to 74 (MALVPSPRAG…PAANNVSLTP (74 aa)) are disordered. Positions 31-41 (STAGAAPTATR) are enriched in low complexity.

The protein belongs to the DNA polymerase type-B family. As to quaternary structure, heterodimer with the terminal protein; this heterodimer binds to bp 9 to 18 of the genome. Forms a complex with viral pTP, DBP and hosts NFIA and POU2F1/OCT1 for initiation of replication.

It localises to the host nucleus. It carries out the reaction DNA(n) + a 2'-deoxyribonucleoside 5'-triphosphate = DNA(n+1) + diphosphate. Functionally, eukaryotic-type DNA polymerase involved in viral genomic replication. DNA synthesis is protein primed, and acts in a strand displacement replication. Assembles in complex with viral pTP, DBP, host NFIA and host POU2F1/OCT1 on viral origin of replication. The polymerase covalently transfers dCMP onto pTP, thereby initiating complementary strand synthesis. The polypeptide is DNA polymerase (Human adenovirus F serotype 40 (HAdV-40)).